The chain runs to 430 residues: MKQALRVAFGFLMLWAAVLHAEVRIEITQGVDSARPIGVVPFKWAGPGAAPEDIGGIVAADLRNSGKFNPLDRSRLPQQPATAQEVQPTAWSALGIDAVIVGLVTPNPDGSYNVAYQLVDTGGAPGTVLAQNSYKVNKQWLRYAGHTASDEVFEKLTGIKGAFRTRIAYVVQTNGGQFPYELRVSDYDGYNQFVVHRSPQPLMSPAWSPDGSKLAYVTFESGRSALVIQTLANGAVRQVASFPRHNGAPAFSPDGTKLAFALSKTGSLNLYVMDLASGQIRQITDGRSNNTEPTWFPDSQTLAFTSDQAGRPQVYKMNINGGAAQRITWEGSQNQDADVSSDGKFMVMVSSNNGQQHIAKQDLVTGGVQVLSSTFLDETPSLAPNGTMVIYSSSQGMGSVLNLVSTDGRFKARLPATDGQVKSPAWSPYL.

The first 21 residues, methionine 1–alanine 21, serve as a signal peptide directing secretion.

Belongs to the TolB family. The Tol-Pal system is composed of five core proteins: the inner membrane proteins TolA, TolQ and TolR, the periplasmic protein TolB and the outer membrane protein Pal. They form a network linking the inner and outer membranes and the peptidoglycan layer.

Its subcellular location is the periplasm. Part of the Tol-Pal system, which plays a role in outer membrane invagination during cell division and is important for maintaining outer membrane integrity. TolB occupies a key intermediary position in the Tol-Pal system because it communicates directly with both membrane-embedded components, Pal in the outer membrane and TolA in the inner membrane. The polypeptide is Tol-Pal system protein TolB (Salmonella typhi).